A 209-amino-acid polypeptide reads, in one-letter code: Large ribosomal subunit protein uL3 (209 aa).

Positions 133-153 (THGNSLSHRVPGSIGQNQTPG) are disordered. Residue Q150 is modified to N5-methylglutamine.

The protein belongs to the universal ribosomal protein uL3 family. As to quaternary structure, part of the 50S ribosomal subunit. Forms a cluster with proteins L14 and L19. Methylated by PrmB.

One of the primary rRNA binding proteins, it binds directly near the 3'-end of the 23S rRNA, where it nucleates assembly of the 50S subunit. The protein is Large ribosomal subunit protein uL3 of Serratia proteamaculans (strain 568).